The chain runs to 393 residues: Chorismate synthase (393 aa).

Positions 40 and 46 each coordinate NADP(+). Residues 129–131 (RSS), 249–250 (QA), Gly-301, 316–320 (KPIPT), and Arg-342 each bind FMN.

The protein belongs to the chorismate synthase family. As to quaternary structure, homotetramer. FMNH2 is required as a cofactor.

The enzyme catalyses 5-O-(1-carboxyvinyl)-3-phosphoshikimate = chorismate + phosphate. It functions in the pathway metabolic intermediate biosynthesis; chorismate biosynthesis; chorismate from D-erythrose 4-phosphate and phosphoenolpyruvate: step 7/7. Functionally, catalyzes the anti-1,4-elimination of the C-3 phosphate and the C-6 proR hydrogen from 5-enolpyruvylshikimate-3-phosphate (EPSP) to yield chorismate, which is the branch point compound that serves as the starting substrate for the three terminal pathways of aromatic amino acid biosynthesis. This reaction introduces a second double bond into the aromatic ring system. This Geobacter sulfurreducens (strain ATCC 51573 / DSM 12127 / PCA) protein is Chorismate synthase.